A 427-amino-acid polypeptide reads, in one-letter code: Gamma-glutamyl phosphate reductase (427 aa).

Belongs to the gamma-glutamyl phosphate reductase family.

The protein resides in the cytoplasm. It catalyses the reaction L-glutamate 5-semialdehyde + phosphate + NADP(+) = L-glutamyl 5-phosphate + NADPH + H(+). Its pathway is amino-acid biosynthesis; L-proline biosynthesis; L-glutamate 5-semialdehyde from L-glutamate: step 2/2. Its function is as follows. Catalyzes the NADPH-dependent reduction of L-glutamate 5-phosphate into L-glutamate 5-semialdehyde and phosphate. The product spontaneously undergoes cyclization to form 1-pyrroline-5-carboxylate. This Rhizobium johnstonii (strain DSM 114642 / LMG 32736 / 3841) (Rhizobium leguminosarum bv. viciae) protein is Gamma-glutamyl phosphate reductase.